Here is a 232-residue protein sequence, read N- to C-terminus: Triosephosphate isomerase (232 aa).

Residue 6-8 (NFK) coordinates substrate. Residue His86 is the Electrophile of the active site. Catalysis depends on Glu155, which acts as the Proton acceptor. 2 residues coordinate substrate: Gly161 and Ser191.

The protein belongs to the triosephosphate isomerase family. Homodimer.

It is found in the cytoplasm. It catalyses the reaction D-glyceraldehyde 3-phosphate = dihydroxyacetone phosphate. It participates in carbohydrate biosynthesis; gluconeogenesis. The protein operates within carbohydrate degradation; glycolysis; D-glyceraldehyde 3-phosphate from glycerone phosphate: step 1/1. Functionally, involved in the gluconeogenesis. Catalyzes stereospecifically the conversion of dihydroxyacetone phosphate (DHAP) to D-glyceraldehyde-3-phosphate (G3P). The sequence is that of Triosephosphate isomerase from Nitratiruptor sp. (strain SB155-2).